Reading from the N-terminus, the 5263-residue chain is Fibroin heavy chain (5263 aa).

The signal sequence occupies residues 1-21 (MRVKTFVILCCALQYVAYTNA). The segment at 149 to 5206 (AAVGAGAGAG…GSGAGAGGSV (5058 aa)) is highly repetitive. Residues Cys-5260 and Cys-5263 are joined by a disulfide bond.

Silk fibroin elementary unit consists in a disulfide-linked heavy and light chain and a p25 glycoprotein in molar ratios of 6:6:1. This results in a complex of approximately 2.3 MDa. In terms of processing, the interchain disulfide bridge is essential for the intracellular transport and secretion of fibroin. As to expression, produced exclusively in the posterior (PSG) section of silk glands, which are essentially modified salivary glands.

Functionally, core component of the silk filament; a strong, insoluble and chemically inert fiber. In Bombyx mori (Silk moth), this protein is Fibroin heavy chain (FIBH).